The following is a 416-amino-acid chain: Choline/ethanolaminephosphotransferase 1 (416 aa).

Residues 1-20 (MSGHRSTRKRCGDSHPESPV) form a disordered region. Position 18 is a phosphoserine (S18). Position 40 is a phosphothreonine (T40). Residue N86 coordinates CDP-choline. A run of 2 helical transmembrane segments spans residues 89–108 (TIIG…FYCP) and 116–133 (LWAY…QSLD). Position 133 (D133) interacts with Mg(2+). N144 carries an N-linked (GlcNAc...) asparagine glycan. E151 provides a ligand contact to CDP-choline. Residue D154 participates in Mg(2+) binding. H155 acts as the Proton acceptor in catalysis. Helical transmembrane passes span 156-176 (GCDS…VQLG), 180-199 (DWMF…AHWQ), 210-230 (IIDV…AVIG), 246-267 (MKLF…NYFR), 286-306 (VLSP…IYKK), 315-334 (HPCL…TNKL), 349-363 (TAFI…DQYF), and 368-388 (DEYI…IRYC). D158 is a binding site for Mg(2+).

Belongs to the CDP-alcohol phosphatidyltransferase class-I family. In terms of assembly, homodimer. The cofactor is Mg(2+). Mn(2+) is required as a cofactor.

It is found in the endoplasmic reticulum membrane. It localises to the nucleus membrane. It catalyses the reaction CDP-ethanolamine + a 1,2-diacyl-sn-glycerol = a 1,2-diacyl-sn-glycero-3-phosphoethanolamine + CMP + H(+). The catalysed reaction is CDP-choline + a 1,2-diacyl-sn-glycerol = a 1,2-diacyl-sn-glycero-3-phosphocholine + CMP + H(+). It carries out the reaction 1-O-alkyl-2-acyl-sn-glycerol + CDP-choline = a 1-O-alkyl-2-acyl-sn-glycero-3-phosphocholine + CMP + H(+). The enzyme catalyses a 1-O-(1Z-alkenyl)-2-acyl-sn-glycerol + CDP-choline = a 1-O-(1Z-alkenyl)-2-acyl-sn-glycero-3-phosphocholine + CMP + H(+). It catalyses the reaction 1,2-dioctanoyl-sn-glycerol + CDP-choline = 1,2-dioctanoyl-sn-glycero-3-phosphocholine + CMP + H(+). The catalysed reaction is 1,2-didecanoyl-sn-glycerol + CDP-choline = 1,2-didecanoyl-sn-glycero-3-phosphocholine + CMP + H(+). It carries out the reaction CDP-choline + 1,2-di-(9Z-octadecenoyl)-sn-glycerol = 1,2-di-(9Z-octadecenoyl)-sn-glycero-3-phosphocholine + CMP + H(+). The enzyme catalyses 1-hexadecanoyl-2-(9Z-octadecenoyl)-sn-glycerol + CDP-choline = 1-hexadecanoyl-2-(9Z-octadecenoyl)-sn-glycero-3-phosphocholine + CMP + H(+). It catalyses the reaction CDP-ethanolamine + 1,2-di-(9Z-octadecenoyl)-sn-glycerol = 1,2-di-(9Z-octadecenoyl)-sn-glycero-3-phosphoethanolamine + CMP + H(+). The catalysed reaction is 1-hexadecanoyl-2-(9Z-octadecenoyl)-sn-glycerol + CDP-ethanolamine = 1-hexadecanoyl-2-(9Z-octadecenoyl)-sn-glycero-3-phosphoethanolamine + CMP + H(+). It carries out the reaction 1-hexadecanoyl-2-(4Z,7Z,10Z,13Z,16Z,19Z-docosahexaenoyl)-sn-glycerol + CDP-choline = 1-hexadecanoyl-2-(4Z,7Z,10Z,13Z,16Z,19Z-docosahexaenoyl)-sn-glycero-3-phosphocholine + CMP + H(+). The enzyme catalyses 1,2-di-(9Z-hexadecenoyl)-sn-glycerol + CDP-choline = 1,2-di-(9Z-hexadecenoyl)-sn-glycero-3-phosphocholine + CMP + H(+). It catalyses the reaction 1,2-di-(9Z-hexadecenoyl)-sn-glycerol + CDP-ethanolamine = 1,2-di-(9Z-hexadecenoyl)-sn-glycero-3-phosphoethanolamine + CMP + H(+). The catalysed reaction is 1-O-hexadecyl-2-acetyl-sn-glycerol + CDP-choline = 1-O-hexadecyl-2-acetyl-sn-glycero-3-phosphocholine + CMP + H(+). It carries out the reaction 1-O-hexadecyl-2-(5Z,8Z,11Z,14Z-eicosatetraenoyl)-sn-glycerol + CDP-choline = 1-O-hexadecyl-2-(5Z,8Z,11Z,14Z)-eicosatetraenoyl-sn-glycero-3-phosphocholine + CMP + H(+). The protein operates within phospholipid metabolism; phosphatidylethanolamine biosynthesis; phosphatidylethanolamine from ethanolamine: step 3/3. It participates in phospholipid metabolism; phosphatidylcholine biosynthesis; phosphatidylcholine from phosphocholine: step 2/2. Functionally, catalyzes both phosphatidylcholine and phosphatidylethanolamine biosynthesis from CDP-choline and CDP-ethanolamine, respectively. Involved in protein-dependent process of phospholipid transport to distribute phosphatidyl choline to the lumenal surface. Has a higher cholinephosphotransferase activity than ethanolaminephosphotransferase activity. The protein is Choline/ethanolaminephosphotransferase 1 of Rattus norvegicus (Rat).